A 106-amino-acid chain; its full sequence is Urease subunit beta (106 aa).

It belongs to the urease beta subunit family. Heterotrimer of UreA (gamma), UreB (beta) and UreC (alpha) subunits. Three heterotrimers associate to form the active enzyme.

The protein localises to the cytoplasm. It catalyses the reaction urea + 2 H2O + H(+) = hydrogencarbonate + 2 NH4(+). The protein operates within nitrogen metabolism; urea degradation; CO(2) and NH(3) from urea (urease route): step 1/1. The protein is Urease subunit beta of Synechococcus sp. (strain CC9605).